A 324-amino-acid polypeptide reads, in one-letter code: Dermonecrotic toxin Hl-PLD1 (324 aa).

Residues 1 to 35 (MAHCYYNSKRGCNRVMKTVALVVLISTVMVEESRG) form the signal peptide. The active site involves His-50. Glu-70 and Asp-72 together coordinate Mg(2+). His-86 functions as the Nucleophile in the catalytic mechanism. 2 disulfides stabilise this stretch: Cys-90–Cys-96 and Cys-92–Cys-236. Asp-130 contacts Mg(2+).

The protein belongs to the arthropod phospholipase D family. Class II subfamily. It depends on Mg(2+) as a cofactor. As to expression, expressed by the venom gland.

It is found in the secreted. It carries out the reaction an N-(acyl)-sphingosylphosphocholine = an N-(acyl)-sphingosyl-1,3-cyclic phosphate + choline. The catalysed reaction is an N-(acyl)-sphingosylphosphoethanolamine = an N-(acyl)-sphingosyl-1,3-cyclic phosphate + ethanolamine. It catalyses the reaction a 1-acyl-sn-glycero-3-phosphocholine = a 1-acyl-sn-glycero-2,3-cyclic phosphate + choline. The enzyme catalyses a 1-acyl-sn-glycero-3-phosphoethanolamine = a 1-acyl-sn-glycero-2,3-cyclic phosphate + ethanolamine. Dermonecrotic toxins cleave the phosphodiester linkage between the phosphate and headgroup of certain phospholipids (sphingolipid and lysolipid substrates), forming an alcohol (often choline) and a cyclic phosphate. This toxin acts on sphingomyelin (SM) with a high activity. It may also act on ceramide phosphoethanolamine (CPE), lysophosphatidylcholine (LPC) and lysophosphatidylethanolamine (LPE), but not on lysophosphatidylserine (LPS), and lysophosphatidylglycerol (LPG). It acts by transphosphatidylation, releasing exclusively cyclic phosphate products as second products. In vivo, shows dermonecrotic activity when intradermally injected into rabbit skin and is lethal to mice. Induces increased vascular permeability, edema, inflammatory response, and platelet aggregation. Does not show hemolytic activity (at up to 50 ug). This Hemiscorpius lepturus (Scorpion) protein is Dermonecrotic toxin Hl-PLD1.